The sequence spans 259 residues: Deoxyribose-phosphate aldolase (259 aa).

Catalysis depends on Asp-102, which acts as the Proton donor/acceptor. Lys-167 serves as the catalytic Schiff-base intermediate with acetaldehyde. Residue Lys-201 is the Proton donor/acceptor of the active site.

Belongs to the DeoC/FbaB aldolase family. DeoC type 2 subfamily.

The protein resides in the cytoplasm. The catalysed reaction is 2-deoxy-D-ribose 5-phosphate = D-glyceraldehyde 3-phosphate + acetaldehyde. Its pathway is carbohydrate degradation; 2-deoxy-D-ribose 1-phosphate degradation; D-glyceraldehyde 3-phosphate and acetaldehyde from 2-deoxy-alpha-D-ribose 1-phosphate: step 2/2. Catalyzes a reversible aldol reaction between acetaldehyde and D-glyceraldehyde 3-phosphate to generate 2-deoxy-D-ribose 5-phosphate. This is Deoxyribose-phosphate aldolase from Salmonella dublin (strain CT_02021853).